The following is a 400-amino-acid chain: CinA-like protein (400 aa).

This sequence belongs to the CinA family.

The sequence is that of CinA-like protein from Shigella flexneri.